Reading from the N-terminus, the 77-residue chain is Exodeoxyribonuclease 7 small subunit (77 aa).

This sequence belongs to the XseB family. In terms of assembly, heterooligomer composed of large and small subunits.

It localises to the cytoplasm. The catalysed reaction is Exonucleolytic cleavage in either 5'- to 3'- or 3'- to 5'-direction to yield nucleoside 5'-phosphates.. Functionally, bidirectionally degrades single-stranded DNA into large acid-insoluble oligonucleotides, which are then degraded further into small acid-soluble oligonucleotides. The protein is Exodeoxyribonuclease 7 small subunit of Carboxydothermus hydrogenoformans (strain ATCC BAA-161 / DSM 6008 / Z-2901).